Consider the following 610-residue polypeptide: Glutamine--fructose-6-phosphate aminotransferase [isomerizing] (610 aa).

C2 serves as the catalytic Nucleophile; for GATase activity. The region spanning 2 to 218 (CGIVGAVAQR…EGDVAEITRR (217 aa)) is the Glutamine amidotransferase type-2 domain. 2 SIS domains span residues 286-426 (AVEI…QQNR) and 459-600 (LAPD…VDQP). K605 functions as the For Fru-6P isomerization activity in the catalytic mechanism.

Homodimer.

The protein localises to the cytoplasm. It carries out the reaction D-fructose 6-phosphate + L-glutamine = D-glucosamine 6-phosphate + L-glutamate. Its function is as follows. Catalyzes the first step in hexosamine metabolism, converting fructose-6P into glucosamine-6P using glutamine as a nitrogen source. The chain is Glutamine--fructose-6-phosphate aminotransferase [isomerizing] from Aliivibrio fischeri (strain ATCC 700601 / ES114) (Vibrio fischeri).